Consider the following 640-residue polypeptide: Chaperone protein dnaK2 (640 aa).

Thr-197 carries the post-translational modification Phosphothreonine; by autocatalysis. The tract at residues 605-640 is disordered; it reads VYQSAQSSDGTGSSSSGGSGSGGDDEVIDAEFSETK. Over residues 627 to 640 the composition is skewed to acidic residues; it reads GDDEVIDAEFSETK.

It belongs to the heat shock protein 70 family.

Functionally, acts as a chaperone. This chain is Chaperone protein dnaK2 (dnaK2), found in Thermosynechococcus vestitus (strain NIES-2133 / IAM M-273 / BP-1).